A 258-amino-acid chain; its full sequence is RIO-type serine/threonine-protein kinase Rio1 (258 aa).

In terms of domain architecture, Protein kinase spans 49-258 (TAMGGVISTG…EEMLKEVKGE (210 aa)). ATP is bound by residues 55-63 (ISTGKEANV) and lysine 80. Serine 108 is modified (phosphoserine; by autocatalysis). Residues glutamate 148 and isoleucine 150 each contribute to the ATP site. The active-site Proton acceptor is aspartate 196. Tyrosine 200, asparagine 201, and aspartate 212 together coordinate ATP. Residues asparagine 201 and aspartate 212 each contribute to the Mg(2+) site. The 4-aspartylphosphate intermediate role is filled by aspartate 212.

The protein belongs to the protein kinase superfamily. RIO-type Ser/Thr kinase family. The cofactor is Mg(2+).

The enzyme catalyses L-seryl-[protein] + ATP = O-phospho-L-seryl-[protein] + ADP + H(+). The catalysed reaction is L-threonyl-[protein] + ATP = O-phospho-L-threonyl-[protein] + ADP + H(+). Its function is as follows. Autophosphorylation of the rio1 protein is not necessary for maintenance of kinase activity. Prefers ATP over GTP. The yeast ortholog is involved in ribosome biogenesis. Despite the protein kinase domain is proposed to act predominantly as an ATPase. The sequence is that of RIO-type serine/threonine-protein kinase Rio1 (rio1) from Archaeoglobus fulgidus (strain ATCC 49558 / DSM 4304 / JCM 9628 / NBRC 100126 / VC-16).